Reading from the N-terminus, the 333-residue chain is NADH-quinone oxidoreductase subunit H (333 aa).

8 consecutive transmembrane segments (helical) span residues 15–35 (FFIF…FVTY), 88–108 (FILA…VIPF), 117–137 (IGVG…GVVT), 159–179 (ISYE…AGSL), 191–211 (VWYI…AVAE), 239–259 (WAFF…LITV), 274–296 (IPGA…WFRV), and 313–333 (VLLP…ELFF).

It belongs to the complex I subunit 1 family. NDH-1 is composed of 14 different subunits. Subunits NuoA, H, J, K, L, M, N constitute the membrane sector of the complex.

It is found in the cell membrane. The enzyme catalyses a quinone + NADH + 5 H(+)(in) = a quinol + NAD(+) + 4 H(+)(out). Its function is as follows. NDH-1 shuttles electrons from NADH, via FMN and iron-sulfur (Fe-S) centers, to quinones in the respiratory chain. The immediate electron acceptor for the enzyme in this species is believed to be ubiquinone. Couples the redox reaction to proton translocation (for every two electrons transferred, four hydrogen ions are translocated across the cytoplasmic membrane), and thus conserves the redox energy in a proton gradient. This subunit may bind ubiquinone. The polypeptide is NADH-quinone oxidoreductase subunit H (Bacillus thuringiensis subsp. konkukian (strain 97-27)).